Reading from the N-terminus, the 81-residue chain is Exodeoxyribonuclease 7 small subunit (81 aa).

This sequence belongs to the XseB family. As to quaternary structure, heterooligomer composed of large and small subunits.

It is found in the cytoplasm. The catalysed reaction is Exonucleolytic cleavage in either 5'- to 3'- or 3'- to 5'-direction to yield nucleoside 5'-phosphates.. Its function is as follows. Bidirectionally degrades single-stranded DNA into large acid-insoluble oligonucleotides, which are then degraded further into small acid-soluble oligonucleotides. This is Exodeoxyribonuclease 7 small subunit from Rhodopseudomonas palustris (strain BisA53).